The primary structure comprises 94 residues: Prepro-gonadotropin-releasing hormone-like protein (94 aa).

The signal sequence occupies residues 1–21 (MNACILLTTLVTMITIEKVQG).

The protein localises to the secreted. In terms of biological role, neuropeptide involved in reproduction. May be an important hormone in the regulation of gonadal maturation. This is Prepro-gonadotropin-releasing hormone-like protein from Ruditapes philippinarum (Japanese carpet shell).